Reading from the N-terminus, the 591-residue chain is V-type ATP synthase alpha chain (591 aa).

233-240 (GPFGAGKT) is a binding site for ATP.

It belongs to the ATPase alpha/beta chains family.

It carries out the reaction ATP + H2O + 4 H(+)(in) = ADP + phosphate + 5 H(+)(out). In terms of biological role, produces ATP from ADP in the presence of a proton gradient across the membrane. The V-type alpha chain is a catalytic subunit. The polypeptide is V-type ATP synthase alpha chain (Streptococcus pneumoniae serotype 19F (strain G54)).